The primary structure comprises 670 residues: Polar flagellar hook-associated protein 2 (670 aa).

Positions 226–300 (PLQAPQQPDQ…RSSLRPEERI (75 aa)) are disordered. The segment covering 257–266 (AQDDAQDDAS) has biased composition (acidic residues). A compositionally biased stretch (low complexity) spans 272–283 (AAGAEAAKAGQE). A compositionally biased stretch (basic and acidic residues) spans 284 to 300 (AIDKANQRSSLRPEERI). Residues 342 to 428 (GTLTDSYVTT…AQSSFEEYLG (87 aa)) are a coiled coil.

It belongs to the FliD family. Homopentamer.

Its subcellular location is the secreted. It localises to the bacterial flagellum. Functionally, required for the morphogenesis and for the elongation of the flagellar filament by facilitating polymerization of the flagellin monomers at the tip of growing filament. Forms a capping structure, which prevents flagellin subunits (transported through the central channel of the flagellum) from leaking out without polymerization at the distal end. Important for swimming motility. This Vibrio parahaemolyticus serotype O3:K6 (strain RIMD 2210633) protein is Polar flagellar hook-associated protein 2 (fliDP).